We begin with the raw amino-acid sequence, 229 residues long: uncharacterized protein (229 aa).

Residues 1–102 (MKLLGRKKSY…AASKAQITDR (102 aa)) are disordered. A compositionally biased stretch (basic residues) spans 73–94 (ARRKSLAPPKCHRAERRAKRAA). The next 2 helical transmembrane spans lie at 137–157 (LGLFTPSALVLLFITFGVPQL) and 159–179 (LYMSPAMLVLLSVMGIDGIIL).

Its subcellular location is the cell membrane. This is an uncharacterized protein from Mycobacterium leprae (strain TN).